We begin with the raw amino-acid sequence, 81 residues long: Cytotoxin 3 (81 aa).

A signal peptide spans 1–21; sequence MKTLLLTLVVVTIVCLDLGYT. 4 disulfides stabilise this stretch: cysteine 24/cysteine 42, cysteine 35/cysteine 59, cysteine 63/cysteine 74, and cysteine 75/cysteine 80.

This sequence belongs to the three-finger toxin family. Short-chain subfamily. Type IA cytotoxin sub-subfamily. Monomer in solution; Homodimer and oligomer in the presence of negatively charged lipids forming a pore with a size ranging between 20 and 30 Angstroms. Interacts with Kv channel-interacting protein 1 (KCNIP1) in a calcium-independent manner. Expressed by the venom gland.

It is found in the secreted. Its subcellular location is the target cell membrane. Functionally, basic protein that binds to cell membrane and depolarizes cardiomyocytes. This cytotoxin also possesses lytic activity on many other cells, including red blood cells. Interaction with sulfatides in the cell membrane induces pore formation and cell internalization. Cytotoxicity is due to pore formation, and to another mechanism independent of membrane-damaging activity. When internalized, it targets the mitochondrial membrane and induces mitochondrial swelling and fragmentation. It inhibits protein kinases C. It binds to the integrin alpha-V/beta-3 (ITGAV/ITGB3) with a moderate affinity. It also binds with high affinity to heparin. This Naja atra (Chinese cobra) protein is Cytotoxin 3.